A 72-amino-acid polypeptide reads, in one-letter code: UPF0154 protein EF_1734 (72 aa).

A helical transmembrane segment spans residues 4-26 (GWVVLIAVIALLVGAAGGFFLAR).

Belongs to the UPF0154 family.

Its subcellular location is the membrane. The sequence is that of UPF0154 protein EF_1734 from Enterococcus faecalis (strain ATCC 700802 / V583).